A 253-amino-acid polypeptide reads, in one-letter code: Zwei Ig domain protein zig-4 (253 aa).

Residues 1 to 16 (MFAIALLSFLVVLINA) form the signal peptide. Ig-like C2-type domains follow at residues 43–146 (PAKI…AEVE) and 162–245 (PEIV…TFLY). 2 disulfide bridges follow: C67–C130 and C183–C229.

As to expression, expressed in PVT, ASK, BAG, M2 and ASI neurons. In L1 larvae, expressed in pharyngeal ectoderm and mesoderm.

The protein localises to the secreted. Functionally, required for maintaining axon position of PVQ and PVP neurons postembryonically in the ventral nerve cord (VNC) by preventing axons drifting into the opposite side of the VNC that could occur during body growth and movement. This chain is Zwei Ig domain protein zig-4, found in Caenorhabditis elegans.